The primary structure comprises 304 residues: Foldase protein PrsA (304 aa).

The signal sequence occupies residues 1 to 19 (MKKKLLSVAAVASVFTLAA). Cysteine 20 carries the N-palmitoyl cysteine lipid modification. A lipid anchor (S-diacylglycerol cysteine) is attached at cysteine 20. In terms of domain architecture, PpiC spans 140–231 (KVEVKASHIL…FGYHIIKVTD (92 aa)). The segment at 285 to 304 (FDLDKQEQQQMQQQMQQQQQ) is disordered. Low complexity predominate over residues 292–304 (QQQMQQQMQQQQQ).

The protein belongs to the PrsA family.

It localises to the cell membrane. The enzyme catalyses [protein]-peptidylproline (omega=180) = [protein]-peptidylproline (omega=0). In terms of biological role, plays a major role in protein secretion by helping the post-translocational extracellular folding of several secreted proteins. The chain is Foldase protein PrsA from Exiguobacterium sibiricum (strain DSM 17290 / CCUG 55495 / CIP 109462 / JCM 13490 / 255-15).